The following is a 96-amino-acid chain: Large ribosomal subunit protein eL14 (96 aa).

Belongs to the eukaryotic ribosomal protein eL14 family.

The sequence is that of Large ribosomal subunit protein eL14 from Desulfurococcus amylolyticus (strain DSM 18924 / JCM 16383 / VKM B-2413 / 1221n) (Desulfurococcus kamchatkensis).